The sequence spans 332 residues: Ribosomal RNA small subunit methyltransferase C (332 aa).

Belongs to the methyltransferase superfamily. RsmC family. In terms of assembly, monomer.

The protein localises to the cytoplasm. It catalyses the reaction guanosine(1207) in 16S rRNA + S-adenosyl-L-methionine = N(2)-methylguanosine(1207) in 16S rRNA + S-adenosyl-L-homocysteine + H(+). Its function is as follows. Specifically methylates the guanine in position 1207 of 16S rRNA in the 30S particle. The polypeptide is Ribosomal RNA small subunit methyltransferase C (Pseudomonas syringae pv. tomato (strain ATCC BAA-871 / DC3000)).